A 325-amino-acid polypeptide reads, in one-letter code: DNA-directed RNA polymerase subunit alpha (325 aa).

Residues 1 to 238 are alpha N-terminal domain (alpha-NTD); that stretch reads MSLKSLLKGF…EHLTVFINFE (238 aa). An alpha C-terminal domain (alpha-CTD) region spans residues 254-325; sequence KLKASLSKHV…LGLSFGMRDF (72 aa).

The protein belongs to the RNA polymerase alpha chain family. As to quaternary structure, homodimer. The RNAP catalytic core consists of 2 alpha, 1 beta, 1 beta' and 1 omega subunit. When a sigma factor is associated with the core the holoenzyme is formed, which can initiate transcription.

The enzyme catalyses RNA(n) + a ribonucleoside 5'-triphosphate = RNA(n+1) + diphosphate. DNA-dependent RNA polymerase catalyzes the transcription of DNA into RNA using the four ribonucleoside triphosphates as substrates. The polypeptide is DNA-directed RNA polymerase subunit alpha (Leptospira borgpetersenii serovar Hardjo-bovis (strain JB197)).